We begin with the raw amino-acid sequence, 606 residues long: Vitamin B12 transporter BtuB (606 aa).

The signal sequence occupies residues 1–22; the sequence is MQKSLLAIAMASLLTPVSYLHA. The short motif at 29–36 is the TonB box element; it reads DTVVVTAN. The TBDR plug domain occupies 41–153; the sequence is PLAEVIASTT…IAGVINVITT (113 aa). One can recognise a TBDR beta-barrel domain in the interval 158 to 606; the sequence is SEGSVVSLGA…RYFANLTYQF (449 aa). Positions 589 to 606 match the TonB C-terminal box motif; sequence LSYNAPERRYFANLTYQF.

The protein belongs to the TonB-dependent receptor family. BtuB (TC 1.B.14.3.1) subfamily.

It localises to the cell outer membrane. Functionally, involved in the active translocation of vitamin B12 (cyanocobalamin) across the outer membrane to the periplasmic space. It derives its energy for transport by interacting with the trans-periplasmic membrane protein TonB. In Vibrio vulnificus (strain CMCP6), this protein is Vitamin B12 transporter BtuB.